The chain runs to 1004 residues: E3 ubiquitin-protein ligase NEDD4-like (1004 aa).

The C2 domain maps to 30-154; it reads LASHHSRGLE…TEDPTMERPY (125 aa). Disordered stretches follow at residues 207 to 230 and 272 to 407; these read SNDS…WEEK and AAHR…TPSV. The region spanning 221-254 is the WW 1 domain; the sequence is PPLPPGWEEKVDNLGRTYYVNHNNRSTQWHRPSL. Phosphoserine is present on S341. T347 bears the Phosphothreonine mark. Composition is skewed to polar residues over residues 347–359 and 366–376; these read TPDS…SSLI and RLRSCSVTDTV. Residue S371 is modified to Phosphoserine; by WNK1 and WNK4. T396 is modified (phosphothreonine; by SGK1). Residues 414–447 enclose the WW 2 domain; sequence PGLPSGWEERKDAKGRTYYVNHNNRTTTWTRPIM. Residues 453-523 are disordered; that stretch reads GASGSATNSN…YNSPKPQHKV (71 aa). S475 carries the post-translational modification Phosphoserine. The residue at position 477 (S477) is a Phosphoserine; by SGK1. Phosphoserine occurs at positions 478, 493, 504, 508, 512, and 516. Residues 489–500 show a composition bias toward basic and acidic residues; sequence GAKDSPIRRAVK. WW domains lie at 526 to 559 and 577 to 610; these read SFLP…DPRL and GPLP…DPRL. Residues 669-1003 enclose the HECT domain; the sequence is RPDVLKARLW…VENAQGFEGV (335 aa). C971 functions as the Glycyl thioester intermediate in the catalytic mechanism.

In terms of assembly, interacts with UBE2E3. Interacts with NDFIP1; this interaction activates the E3 ubiquitin-protein ligase. Interacts with NDFIP2; this interaction activates the E3 ubiquitin-protein ligase. Interacts (via WW domains) with SCN1A. Interacts (via WW domains) with SCN2A. Interacts (via WW domains) with SCN3A. Interacts (via WW domains) with SCN5A. Interacts (via WW domains) with SCN8A. Interacts (via WW domains) with SCN9A. Interacts (via WW domains) with SCN10A. Interacts (via WW domains) with CLCN5. Interacts with SMAD2. Interacts with SMAD3. Interacts with SMAD6. Interacts with SMAD7. The phosphorylated form interacts with 14-3-3 proteins. Interacts with TNK2. Interacts with WNK1. Interacts with SGK1. Interacts (via C2 domain) with NPC2. Interacts with ARRDC4. Interacts with KCNQ1; promotes internalization of KCNQ1. Interacts (via domains WW1, 3 and 4) with USP36; the interaction inhibits ubiquitination of, at least, NTRK1, KCNQ2 and KCNQ3 by NEDD4L. Interacts with PRRG4 (via cytoplasmic domain). Interacts with LDLRAD3; the interaction is direct. Interacts with UBE2D2. Interacts with TTYH2 and TTYH3. Phosphorylated; which impairs interaction with SCNN. Interaction with YWHAH inhibits dephosphorylation. Aldosterone induces Ser-477 phosphorylation by SGK1. Post-translationally, auto-ubiquitinated. Deubiquitinated by USP36, no effect on NEDD4L protein levels. Both proteins interact and regulate each other's ubiquitination levels. In terms of tissue distribution, highly expressed in liver and kidney. Also expressed in heart, brain and lung. Isoform 1 is expressed in kidney, lung and gut. Isoform 3 is ubiquitously expressed.

It is found in the cytoplasm. The protein localises to the golgi apparatus. It localises to the endosome. The protein resides in the multivesicular body. The catalysed reaction is S-ubiquitinyl-[E2 ubiquitin-conjugating enzyme]-L-cysteine + [acceptor protein]-L-lysine = [E2 ubiquitin-conjugating enzyme]-L-cysteine + N(6)-ubiquitinyl-[acceptor protein]-L-lysine.. The enzyme catalyses [E2 ubiquitin-conjugating enzyme]-S-ubiquitinyl-L-cysteine + [acceptor protein]-L-cysteine = [E2 ubiquitin-conjugating enzyme]-L-cysteine + [acceptor protein]-S-ubiquitinyl-L-cysteine.. It participates in protein modification; protein ubiquitination. Its activity is regulated as follows. Activated by NDFIP1- and NDFIP2-binding. E3 ubiquitin-protein ligase that mediates the polyubiquitination of lysine and cysteine residues on target proteins and is thereby implicated in the regulation of various signaling pathways including autophagy, innate immunity or DNA repair. Inhibits TGF-beta signaling by triggering SMAD2 and TGFBR1 ubiquitination and proteasome-dependent degradation. Downregulates autophagy and cell growth by ubiquitinating and reducing cellular ULK1 or ASCT2 levels. Promotes ubiquitination and internalization of various plasma membrane channels such as ENaC, SCN2A/Nav1.2, SCN3A/Nav1.3, SCN5A/Nav1.5, SCN9A/Nav1.7, SCN10A/Nav1.8, KCNA3/Kv1.3, KCNH2, EAAT1, KCNQ2/Kv7.2, KCNQ3/Kv7.3 or CLC5. Promotes ubiquitination and degradation of SGK1 and TNK2. Ubiquitinates BRAT1 and this ubiquitination is enhanced in the presence of NDFIP1. Plays a role in dendrite formation by melanocytes. Involved in the regulation of TOR signaling. Ubiquitinates and regulates protein levels of NTRK1 once this one is activated by NGF. Plays a role in antiviral innate immunity by catalyzing 'Lys-29'-linked cysteine ubiquitination of TRAF3, resulting in enhanced 'Lys-48' and 'Lys-63'-linked ubiquitination of TRAF3. Ubiquitinates TTYH2 and TYYH3 and regulates protein levels of TTYH2. This Mus musculus (Mouse) protein is E3 ubiquitin-protein ligase NEDD4-like (Nedd4l).